Consider the following 444-residue polypeptide: N-succinylarginine dihydrolase (444 aa).

Substrate contacts are provided by residues 19–28 (SGLSVGNIAS), Asn110, and 137–138 (HR). The active site involves Glu174. Arg214 lines the substrate pocket. His250 is a catalytic residue. Residues Asp252 and Asn362 each contribute to the substrate site. Cys368 functions as the Nucleophile in the catalytic mechanism.

Belongs to the succinylarginine dihydrolase family. In terms of assembly, homodimer.

It catalyses the reaction N(2)-succinyl-L-arginine + 2 H2O + 2 H(+) = N(2)-succinyl-L-ornithine + 2 NH4(+) + CO2. Its pathway is amino-acid degradation; L-arginine degradation via AST pathway; L-glutamate and succinate from L-arginine: step 2/5. In terms of biological role, catalyzes the hydrolysis of N(2)-succinylarginine into N(2)-succinylornithine, ammonia and CO(2). The polypeptide is N-succinylarginine dihydrolase (Aliivibrio salmonicida (strain LFI1238) (Vibrio salmonicida (strain LFI1238))).